Here is a 200-residue protein sequence, read N- to C-terminus: Holliday junction branch migration complex subunit RuvA (200 aa).

A domain I region spans residues Met-1 to Arg-63. The tract at residues Thr-64 to Gly-142 is domain II. The tract at residues Asp-143–Ser-153 is flexible linker. Positions Ser-153–Lys-200 are domain III.

This sequence belongs to the RuvA family. As to quaternary structure, homotetramer. Forms an RuvA(8)-RuvB(12)-Holliday junction (HJ) complex. HJ DNA is sandwiched between 2 RuvA tetramers; dsDNA enters through RuvA and exits via RuvB. An RuvB hexamer assembles on each DNA strand where it exits the tetramer. Each RuvB hexamer is contacted by two RuvA subunits (via domain III) on 2 adjacent RuvB subunits; this complex drives branch migration. In the full resolvosome a probable DNA-RuvA(4)-RuvB(12)-RuvC(2) complex forms which resolves the HJ.

It is found in the cytoplasm. In terms of biological role, the RuvA-RuvB-RuvC complex processes Holliday junction (HJ) DNA during genetic recombination and DNA repair, while the RuvA-RuvB complex plays an important role in the rescue of blocked DNA replication forks via replication fork reversal (RFR). RuvA specifically binds to HJ cruciform DNA, conferring on it an open structure. The RuvB hexamer acts as an ATP-dependent pump, pulling dsDNA into and through the RuvAB complex. HJ branch migration allows RuvC to scan DNA until it finds its consensus sequence, where it cleaves and resolves the cruciform DNA. In Trichlorobacter lovleyi (strain ATCC BAA-1151 / DSM 17278 / SZ) (Geobacter lovleyi), this protein is Holliday junction branch migration complex subunit RuvA.